An 807-amino-acid chain; its full sequence is uncharacterized protein (807 aa).

The 286-residue stretch at Ile281 to Ile566 folds into the Reverse transcriptase domain.

The protein resides in the mitochondrion. This is an uncharacterized protein from Schizosaccharomyces pombe (strain 972 / ATCC 24843) (Fission yeast).